The chain runs to 274 residues: Undecaprenyl-diphosphatase 1 (274 aa).

8 consecutive transmembrane segments (helical) span residues 7-27 (LEIFKAVILGIVQGITEWLPV), 48-68 (FISTFLVVIQFGSILAVLVIF), 88-108 (VRLWLKVIIAVIPSGVIGILF), 115-135 (LFFNSTVVAIALIVYGIIMIG), 151-171 (VTYKLALCIGLFQCLALIPGT), 189-209 (YVAAEFSFFLAIPTMLGASAL), 221-241 (FEWLILGVGSVVAFVVSIVVI), and 253-273 (FKVFGYYRIVLGIVVLAYFFL).

It belongs to the UppP family.

The protein localises to the cell membrane. The catalysed reaction is di-trans,octa-cis-undecaprenyl diphosphate + H2O = di-trans,octa-cis-undecaprenyl phosphate + phosphate + H(+). Functionally, catalyzes the dephosphorylation of undecaprenyl diphosphate (UPP). Confers resistance to bacitracin. This chain is Undecaprenyl-diphosphatase 1, found in Clostridioides difficile (strain 630) (Peptoclostridium difficile).